The following is a 630-amino-acid chain: DNA mismatch repair protein MutL (630 aa).

The protein belongs to the DNA mismatch repair MutL/HexB family.

Functionally, this protein is involved in the repair of mismatches in DNA. It is required for dam-dependent methyl-directed DNA mismatch repair. May act as a 'molecular matchmaker', a protein that promotes the formation of a stable complex between two or more DNA-binding proteins in an ATP-dependent manner without itself being part of a final effector complex. The protein is DNA mismatch repair protein MutL of Lactobacillus johnsonii (strain CNCM I-12250 / La1 / NCC 533).